We begin with the raw amino-acid sequence, 638 residues long: uncharacterized protein (638 aa).

Positions 1-138 (MDLVELDYLS…KIENALLKYK (138 aa)) constitute a CID domain. Disordered stretches follow at residues 318–338 (QPPL…YSLS) and 615–638 (LGKR…QESK).

This is an uncharacterized protein from Schizosaccharomyces pombe (strain 972 / ATCC 24843) (Fission yeast).